Here is a 1284-residue protein sequence, read N- to C-terminus: MKSTAESKETPSQDESTTSVPCTEAPLVEEGEEASFGAYKRIFTFAGRTELILQAVAILAACASGAGIALQNLIFGQFVTVITDFTNGISTPADFRDNAAELALYFVYLGIARLVLSYTYNTLLTYAAYRIVRNIRHAYLKAALSQEVAYYDFGSGGSIAAQATSNGKLIQAGASDKIGLLFQGLAAFVTLSLSRLWCKWKLTLICICIPVATIGTTGVVAAVEAGHETRILQIHAQANSFAEGILAGVKAVHAFGMRDSLVRKFDEYLVEAHKVGKKISPLLGLLFSAEYTIIYLGYGLAFWQGIHMFGRGEIGTAGDIFTVLLSVVIASINLTLLAPYSIEFSRAASAAAQLFRLIDRESEINPYGKEGLEPERVLGDVELENVTFSYPTRPGITVLDNFSLKVPAGKVTALVGQSGSGKSTIVGLLERWYNPTSGAIRLDGNLISELNVGWLRRNVRLVQQEPVLFQGSVFDNIRYGLVGTPWENASREEQMERVQEAAKLAYAHEFISELTDGYDTLIGERGGLLSGGQKQRVAIARSVVSQPKVLLLDEATSALDPHAETIVQKALDKAAEGRTTIVIAHKLATIRKADNIVVMSKGHIVEQGTHESLIAKDGVYAGLVKIQNLAVNASAHDNVNEEGEGEDVALLEVTETAVTRYPTSIRGRMNSIKDRDDYENHKHMDMLAALAYLVRECPELKWAYLVVLLGCLGGCAMYPGQAILMSRVVEVFTLSGDAMLDKGDFYASMLIVLAAGCLICYLAVGYATNTIAQHLSHWFRRLILHDMLRQDIQFFDREENTTGALVSRIDSYPHAILELMGYNIALVVIAVLQVVTCGILAIAFSWKLGLVVVFGGIPPLVGAGMVRIRVDSRLDRQTSKKYGTSSSIASEAVNAIRTVSSLAIEETVLRRYTEELDHAVSSSVKPMAATMICFGLTQCIEYWFQALGFWYGCRLVSLGETSMYSFFVAFLSVFFAGQASAQLFQWSTSITKGINATNYIAWLHQLQPTVRETPENHDKGPGSGAPIAMDNVRFSYPLRPDAPILKGVNLKINKGQFIAFVGSSGCGKSTMIAMLERFYDPTTGSITIDASTLTDINPISYRNIVALVQQEPTLFQGTIRDNISLGVFNPNTQPFFSDKDAVKSVSDEQIESALRAANAWDFVSSLPQGIYTPAGSGGSQLSGGQRQRIAIARALIRDPKILLLDEATSALDTESEKIVQKALEGAARDGDRLTVAVAHRLSTIKDANVICVFFGGKIAEMGTHQELIVRGGLYRRMCEAQALD.

Over residues 1 to 11 (MKSTAESKETP) the composition is skewed to basic and acidic residues. The segment at 1–24 (MKSTAESKETPSQDESTTSVPCTE) is disordered. A run of 6 helical transmembrane segments spans residues 55–75 (AVAI…NLIF), 99–119 (AAEL…LSYT), 178–198 (IGLL…RLWC), 203–223 (TLIC…VAAV), 282–302 (LLGL…GLAF), and 320–340 (IFTV…LAPY). The ABC transmembrane type-1 1 domain maps to 55–346 (AVAILAACAS…LAPYSIEFSR (292 aa)). Residues 381-626 (VELENVTFSY…DGVYAGLVKI (246 aa)) enclose the ABC transporter 1 domain. 2 N-linked (GlcNAc...) asparagine glycosylation sites follow: Asn385 and Asn401. 416–423 (GQSGSGKS) contacts ATP. N-linked (GlcNAc...) asparagine glycosylation is found at Asn488 and Asn632. 2 helical membrane passes run 705-725 (LVVL…AILM) and 745-765 (FYAS…LAVG). One can recognise an ABC transmembrane type-1 2 domain in the interval 705 to 992 (LVVLLGCLGG…LFQWSTSITK (288 aa)). Asn800 carries N-linked (GlcNAc...) asparagine glycosylation. 4 consecutive transmembrane segments (helical) span residues 824 to 844 (IALV…AIAF), 846 to 866 (WKLG…AGMV), 931 to 951 (MICF…GFWY), and 955 to 975 (LVSL…SVFF). Asn995 carries N-linked (GlcNAc...) asparagine glycosylation. An ABC transporter 2 domain is found at 1027–1280 (IAMDNVRFSY…GGLYRRMCEA (254 aa)). 1062-1069 (GSSGCGKS) serves as a coordination point for ATP. N-linked (GlcNAc...) asparagine glycosylation is present at Asn1122.

It belongs to the ABC transporter superfamily. ABCB family. Multidrug resistance exporter (TC 3.A.1.201) subfamily.

The protein localises to the cell membrane. Functionally, pleiotropic ABC efflux transporter involved in the protection of the cells against a wide range of toxic compounds. This is ABC multidrug transporter atrC from Emericella nidulans (Aspergillus nidulans).